Consider the following 210-residue polypeptide: Tumor protein D53 homolog (210 aa).

A coiled-coil region spans residues 22–73; that stretch reads VTDVDFTSMISEEEKEELKAELAKLEDEISTLRQVLAAKEKHLIEIKQKLGM. Residues 185–197 show a composition bias toward polar residues; sequence SSTAHASAQSSLA. The tract at residues 185-210 is disordered; that stretch reads SSTAHASAQSSLAGTRLPESEEELQC.

The protein belongs to the TPD52 family. In terms of assembly, forms a homodimer or heterodimer with other members of the family.

This is Tumor protein D53 homolog (TPD52L1) from Gallus gallus (Chicken).